We begin with the raw amino-acid sequence, 211 residues long: Ubiquitin-conjugating enzyme E2 S (211 aa).

A UBC core domain is found at 11 to 157 (HIIRQVYKEV…ARLMTEIHAQ (147 aa)). Cys95 serves as the catalytic Glycyl thioester intermediate. The segment at 157 to 211 (QGSSLRGKDPTDPCSSASATLVSGDGPMAKKHAGDRDKKLAAKKKTDKKRALRRL) is disordered. A compositionally biased stretch (basic residues) spans 197-211 (AAKKKTDKKRALRRL).

The protein belongs to the ubiquitin-conjugating enzyme family.

It catalyses the reaction S-ubiquitinyl-[E1 ubiquitin-activating enzyme]-L-cysteine + [E2 ubiquitin-conjugating enzyme]-L-cysteine = [E1 ubiquitin-activating enzyme]-L-cysteine + S-ubiquitinyl-[E2 ubiquitin-conjugating enzyme]-L-cysteine.. It participates in protein modification; protein ubiquitination. In terms of biological role, catalyzes the covalent attachment of ubiquitin to other proteins. Acts as an essential factor of the anaphase promoting complex/cyclosome (APC/C), a cell cycle-regulated ubiquitin ligase that controls progression through mitosis. Acts by specifically elongating 'Lys-11'-linked polyubiquitin chains initiated by the E2 enzyme ube2c/ubch10 on APC/C substrates, enhancing the degradation of APC/C substrates by the proteasome and promoting mitotic exit. This chain is Ubiquitin-conjugating enzyme E2 S (ube2s), found in Xenopus tropicalis (Western clawed frog).